The sequence spans 250 residues: Small ribosomal subunit protein uS2 (250 aa).

This sequence belongs to the universal ribosomal protein uS2 family.

This chain is Small ribosomal subunit protein uS2, found in Polaromonas sp. (strain JS666 / ATCC BAA-500).